The sequence spans 175 residues: Lithostathine (175 aa).

Residues M1–G26 form the signal peptide. Residues E27–R37 constitute a propeptide that is removed on maturation. A C-type lectin domain is found at I38–F173. Cystine bridges form between C40–C51, C68–C171, and C146–C163.

Cleaved to give an A chain and a B chain joined by a disulfide bond. In pancreatic acinar cells.

The protein resides in the secreted. Its function is as follows. Might act as an inhibitor of spontaneous calcium carbonate precipitation. In Bos taurus (Bovine), this protein is Lithostathine (PTP).